An 865-amino-acid chain; its full sequence is Aconitate hydratase B (865 aa).

Residues arginine 191, 244 to 246 (SSR), 414 to 416 (QDT), and serine 498 contribute to the substrate site. Positions 710, 769, and 772 each coordinate [4Fe-4S] cluster. Positions 791 and 796 each coordinate substrate.

The protein belongs to the aconitase/IPM isomerase family. As to quaternary structure, monomer. Requires [4Fe-4S] cluster as cofactor.

It catalyses the reaction citrate = D-threo-isocitrate. It carries out the reaction (2S,3R)-3-hydroxybutane-1,2,3-tricarboxylate = 2-methyl-cis-aconitate + H2O. It functions in the pathway carbohydrate metabolism; tricarboxylic acid cycle; isocitrate from oxaloacetate: step 2/2. The protein operates within organic acid metabolism; propanoate degradation. Functionally, involved in the catabolism of short chain fatty acids (SCFA) via the tricarboxylic acid (TCA)(acetyl degradation route) and the 2-methylcitrate cycle I (propionate degradation route). Catalyzes the reversible isomerization of citrate to isocitrate via cis-aconitate. Also catalyzes the hydration of 2-methyl-cis-aconitate to yield (2R,3S)-2-methylisocitrate. The apo form of AcnB functions as a RNA-binding regulatory protein which regulates FliC synthesis via interaction with the ftsH transcript to decrease the intracellular levels of FtsH. The lower levels of FtsH protease activity then influence sigma-32, DnaK and ultimately FliC production. This Salmonella typhimurium (strain LT2 / SGSC1412 / ATCC 700720) protein is Aconitate hydratase B (acnB).